The following is a 277-amino-acid chain: Energy-coupling factor transporter ATP-binding protein EcfA1 (277 aa).

The ABC transporter domain maps to 4-238 (IETQDLCHTY…PDLLSSVRLD (235 aa)). 37–44 (GPNGAGKS) serves as a coordination point for ATP.

The protein belongs to the ABC transporter superfamily. Energy-coupling factor EcfA family. As to quaternary structure, forms a stable energy-coupling factor (ECF) transporter complex composed of 2 membrane-embedded substrate-binding proteins (S component), 2 ATP-binding proteins (A component) and 2 transmembrane proteins (T component).

It localises to the cell membrane. Its function is as follows. ATP-binding (A) component of a common energy-coupling factor (ECF) ABC-transporter complex. Unlike classic ABC transporters this ECF transporter provides the energy necessary to transport a number of different substrates. The sequence is that of Energy-coupling factor transporter ATP-binding protein EcfA1 from Methanospirillum hungatei JF-1 (strain ATCC 27890 / DSM 864 / NBRC 100397 / JF-1).